Reading from the N-terminus, the 1745-residue chain is Tight junction protein 1 (1745 aa).

The region spanning Thr-23–Lys-110 is the PDZ 1 domain. A compositionally biased stretch (basic residues) spans Ala-102–Val-112. The segment at Ala-102–Leu-189 is disordered. Residues Pro-123–Val-136 are compositionally biased toward acidic residues. Residue Ser-125 is modified to Phosphoserine. Tyr-132 is subject to Phosphotyrosine. Positions Arg-149 to Ser-175 are enriched in basic and acidic residues. Phosphoserine is present on residues Ser-175, Ser-178, and Ser-179. Thr-185 carries the phosphothreonine modification. Positions Lys-186–Glu-264 constitute a PDZ 2 domain. Phosphoserine occurs at positions 212 and 241. The residue at position 267 (Thr-267) is a Phosphothreonine. Phosphoserine occurs at positions 275, 277, 280, 284, 290, 294, 297, 300, 323, 329, 334, 337, and 353. Residues Ala-296–Pro-364 form a disordered region. Positions His-299–Pro-308 are enriched in basic and acidic residues. Positions His-325 to Leu-338 are enriched in polar residues. Thr-354 bears the Phosphothreonine mark. One can recognise a PDZ 3 domain in the interval Ser-421–Lys-502. The SH3 domain maps to Gly-516–Ala-584. The region spanning Ser-610 to Gln-791 is the Guanylate kinase-like domain. Phosphoserine occurs at positions 617 and 622. Residues Tyr-633–Arg-876 are occludin (OCLN)-binding region. A Phosphothreonine modification is found at Thr-809. A phosphoserine mark is found at Ser-810 and Ser-821. Tyr-822 is subject to Phosphotyrosine. 3 positions are modified to phosphoserine: Ser-824, Ser-828, and Ser-837. Disordered regions lie at residues Ala-825 to Ala-944 and Leu-956 to Gln-1042. Phosphothreonine occurs at positions 846, 848, 854, 861, and 868. Positions Glu-879 to Asn-892 are enriched in basic and acidic residues. The span at Gln-893–Ala-906 shows a compositional bias: low complexity. Ser-912 is modified (phosphoserine). A compositionally biased stretch (basic and acidic residues) spans Asp-998 to Arg-1014. Ser-1071 is modified (phosphoserine). A disordered region spans residues Gln-1090–Gly-1586. A compositionally biased stretch (basic and acidic residues) spans Glu-1106–Glu-1124. Ser-1138 carries the phosphoserine modification. Phosphotyrosine is present on residues Tyr-1139 and Tyr-1164. Residues Arg-1150–Pro-1370 form an actin-binding region (ABR) region. Composition is skewed to basic and acidic residues over residues Lys-1268–Asn-1285 and Pro-1335–Asp-1346. Phosphotyrosine is present on Tyr-1353. Residue Ser-1365 is modified to Phosphoserine. The segment covering Ser-1388 to Ser-1399 has biased composition (low complexity). Residues Gly-1401–Asp-1418 show a composition bias toward basic and acidic residues. Ser-1411 is modified (phosphoserine). The segment covering Ser-1431–Leu-1445 has biased composition (low complexity). Polar residues-rich tracts occupy residues Glu-1455 to Met-1468 and Ala-1510 to Pro-1519. A compositionally biased stretch (basic and acidic residues) spans Pro-1535–Lys-1544. Ser-1542 bears the Phosphoserine mark. A compositionally biased stretch (polar residues) spans Ser-1561–Pro-1580. Phosphoserine is present on Ser-1614. Residues Ala-1631–Phe-1745 enclose the ZU5 domain.

The protein belongs to the MAGUK family. As to quaternary structure, homodimer. Forms heterodimers TJP3. Forms a heterodimer (via PDZ2 domain) with TJP2/ZO2 (via PDZ2 domain). Interacts with OCLN, CALM, claudins, CGN/cingulin, CXADR, GJD3 and UBN1. Interacts (via ZU5 domain) with CDC42BPB. Interacts (via PDZ domain) with GJA1. Interacts (via PDZ domains) with ANKRD2. Interacts with POPDC1 (via the C-terminus cytoplasmic tail). Interacts with GJA12 and KIRREL1. Interacts with HSPA4. Interacts (via ZU5 domain) with MYZAP. Interacts with DLL1. Interacts with USP53 (via the C-terminal region). Interacts with DNMBP (via C-terminal domain); required for the apical cell-cell junction localization of DNMBP. Interacts with SPEF1. Interacts (via N-terminus) with CTNNA1. Interacts with CLDN18. Interacts with CLDN16 (via TRV motif); this is a prerequisite for anchoring of CLDN16 at the tight junction. Interacts with PKP1; the interaction facilitates TJP1/ZO-1 localization to the plasma membrane. Interacts with PATJ (via PDZ1-6 domains); the interaction is required for attachment and extension of TJP1/ZO1 condensates along the apical cell interface. Phosphorylated at tyrosine redidues in response to epidermal growth factor (EGF). This response is dependent on an intact actin microfilament system. Dephosphorylated by PTPRJ. As to expression, expressed between ameloblasts, at ameloblast-ameloblast junctions and in the stratum intermedium during pre-secretory and secretory stages of tooth development (at protein level).

It localises to the cell membrane. The protein localises to the cell junction. It is found in the tight junction. The protein resides in the gap junction. Its subcellular location is the cytoplasm. It localises to the myofibril. The protein localises to the sarcomere. It is found in the i band. In terms of biological role, tjp1, TjpP2, and Tjp3 are closely related scaffolding proteins that link tight junction (TJ) transmembrane proteins such as claudins, junctional adhesion molecules, and occludin to the actin cytoskeleton. Forms a multistranded TJP1/ZO1 condensate which elongates to form a tight junction belt, the belt is anchored at the apical cell membrane via interaction with PATJ. The tight junction acts to limit movement of substances through the paracellular space and as a boundary between the compositionally distinct apical and basolateral plasma membrane domains of epithelial and endothelial cells. Necessary for lumenogenesis, and particularly efficient epithelial polarization and barrier formation. Plays a role in the regulation of cell migration by targeting Cdc42bpb to the leading edge of migrating cells. Plays an important role in podosome formation and associated function, thus regulating cell adhesion and matrix remodeling. With Tjp2 and TJjp3, participates in the junctional retention and stability of the transcription factor Dbpa, but is not involved in its shuttling to the nucleus. May play a role in mediating cell morphology changes during ameloblast differentiation via its role in tight junctions. The protein is Tight junction protein 1 of Mus musculus (Mouse).